Here is a 196-residue protein sequence, read N- to C-terminus: Imidazoleglycerol-phosphate dehydratase (196 aa).

The protein belongs to the imidazoleglycerol-phosphate dehydratase family.

The protein localises to the cytoplasm. The catalysed reaction is D-erythro-1-(imidazol-4-yl)glycerol 3-phosphate = 3-(imidazol-4-yl)-2-oxopropyl phosphate + H2O. It functions in the pathway amino-acid biosynthesis; L-histidine biosynthesis; L-histidine from 5-phospho-alpha-D-ribose 1-diphosphate: step 6/9. This chain is Imidazoleglycerol-phosphate dehydratase, found in Oleidesulfovibrio alaskensis (strain ATCC BAA-1058 / DSM 17464 / G20) (Desulfovibrio alaskensis).